Here is a 42-residue protein sequence, read N- to C-terminus: Photosystem I reaction center subunit IX (42 aa).

A helical transmembrane segment spans residues 7–27; sequence YLSAAPVLSTLWLGALAALLI.

The protein belongs to the PsaJ family.

It is found in the plastid membrane. May help in the organization of the PsaE and PsaF subunits. This is Photosystem I reaction center subunit IX from Cuscuta reflexa (Southern Asian dodder).